We begin with the raw amino-acid sequence, 323 residues long: Type II restriction enzyme BsoBI (323 aa).

Residues Asp-212, Glu-240, and Lys-242 each coordinate Mg(2+).

As to quaternary structure, homodimer.

It carries out the reaction Endonucleolytic cleavage of DNA to give specific double-stranded fragments with terminal 5'-phosphates.. Functionally, a P subtype restriction enzyme that recognizes the double-stranded sequence 5'-CYCGRG-3' and cleaves after C-1. The sequence is that of Type II restriction enzyme BsoBI from Geobacillus stearothermophilus (Bacillus stearothermophilus).